The primary structure comprises 130 residues: Small ribosomal subunit protein uS11 (130 aa).

Positions 1–15 (MARPTKKSGPRKQKR) are enriched in basic residues. Residues 1–21 (MARPTKKSGPRKQKRNVPSGV) form a disordered region.

This sequence belongs to the universal ribosomal protein uS11 family. In terms of assembly, part of the 30S ribosomal subunit. Interacts with proteins S7 and S18. Binds to IF-3.

Functionally, located on the platform of the 30S subunit, it bridges several disparate RNA helices of the 16S rRNA. Forms part of the Shine-Dalgarno cleft in the 70S ribosome. This Synechococcus elongatus (strain ATCC 33912 / PCC 7942 / FACHB-805) (Anacystis nidulans R2) protein is Small ribosomal subunit protein uS11.